The sequence spans 337 residues: NADH-quinone oxidoreductase subunit H (337 aa).

The next 8 membrane-spanning stretches (helical) occupy residues 9-29, 77-97, 110-130, 154-174, 181-201, 229-249, 274-294, and 313-333; these read FAKI…FTYV, FLIA…VIPF, LLYI…AGWA, MGFA…SGIV, FWEW…ISGV, MAFA…SFLA, VPGI…YLWF, and VLIP…YGGV.

This sequence belongs to the complex I subunit 1 family. As to quaternary structure, NDH-1 is composed of 14 different subunits. Subunits NuoA, H, J, K, L, M, N constitute the membrane sector of the complex.

The protein resides in the cell inner membrane. The catalysed reaction is a quinone + NADH + 5 H(+)(in) = a quinol + NAD(+) + 4 H(+)(out). In terms of biological role, NDH-1 shuttles electrons from NADH, via FMN and iron-sulfur (Fe-S) centers, to quinones in the respiratory chain. The immediate electron acceptor for the enzyme in this species is believed to be ubiquinone. Couples the redox reaction to proton translocation (for every two electrons transferred, four hydrogen ions are translocated across the cytoplasmic membrane), and thus conserves the redox energy in a proton gradient. This subunit may bind ubiquinone. The sequence is that of NADH-quinone oxidoreductase subunit H from Halorhodospira halophila (strain DSM 244 / SL1) (Ectothiorhodospira halophila (strain DSM 244 / SL1)).